The following is a 414-amino-acid chain: 2,3-diketo-5-methylthiopentyl-1-phosphate enolase (414 aa).

Lys99 functions as the Proton acceptor in the catalytic mechanism. Residues Lys148, Lys174 to Glu177, His265, Gly338, and Gly360 to Gly361 contribute to the substrate site. Positions 174, 176, and 177 each coordinate Mg(2+). Lys174 carries the post-translational modification N6-carboxylysine.

This sequence belongs to the RuBisCO large chain family. Type IV subfamily. In terms of assembly, homodimer. Requires Mg(2+) as cofactor.

The catalysed reaction is 5-methylsulfanyl-2,3-dioxopentyl phosphate = 2-hydroxy-5-methylsulfanyl-3-oxopent-1-enyl phosphate. The protein operates within amino-acid biosynthesis; L-methionine biosynthesis via salvage pathway; L-methionine from S-methyl-5-thio-alpha-D-ribose 1-phosphate: step 3/6. Functionally, catalyzes the enolization of 2,3-diketo-5-methylthiopentyl-1-phosphate (DK-MTP-1-P) into 2-hydroxy-3-keto-5-methylthiopentenyl-1-phosphate (HK-MTPenyl-1-P). The protein is 2,3-diketo-5-methylthiopentyl-1-phosphate enolase of Bacillus mycoides (strain KBAB4) (Bacillus weihenstephanensis).